The sequence spans 146 residues: Ferredoxin-type protein FwdE (146 aa).

4Fe-4S ferredoxin-type domains are found at residues 90–115 and 116–145; these read IKLFWDENSCIACGSCLGCAALTLDN and FTVGIDEDTCHLCASCIFRCPTNSLKFIKE. Residues Cys125, Cys128, Cys131, and Cys135 each coordinate [4Fe-4S] cluster.

[4Fe-4S] cluster is required as a cofactor.

The polypeptide is Ferredoxin-type protein FwdE (fwdE) (Methanocaldococcus jannaschii (strain ATCC 43067 / DSM 2661 / JAL-1 / JCM 10045 / NBRC 100440) (Methanococcus jannaschii)).